Consider the following 263-residue polypeptide: NADH dehydrogenase [ubiquinone] iron-sulfur protein 3, mitochondrial (263 aa).

The transit peptide at 1-35 (MAAAAARVWCRGLLGAASVGRGAGRPSVLWQHVRR) directs the protein to the mitochondrion.

Belongs to the complex I 30 kDa subunit family. Core subunit of respiratory chain NADH dehydrogenase (Complex I) which is composed of 45 different subunits. Interacts with NDUFAF3. Interacts with RAB5IF. Found in subcomplexes containing subunits NDUFS2, MT-ND1 and NDUFA13.

Its subcellular location is the mitochondrion inner membrane. The catalysed reaction is a ubiquinone + NADH + 5 H(+)(in) = a ubiquinol + NAD(+) + 4 H(+)(out). Functionally, core subunit of the mitochondrial membrane respiratory chain NADH dehydrogenase (Complex I) which catalyzes electron transfer from NADH through the respiratory chain, using ubiquinone as an electron acceptor. Essential for the catalytic activity and assembly of complex I. The polypeptide is NADH dehydrogenase [ubiquinone] iron-sulfur protein 3, mitochondrial (Ndufs3) (Mus musculus (Mouse)).